We begin with the raw amino-acid sequence, 2554 residues long: Highly reducing polyketide synthase PKS6 (2554 aa).

The disordered stretch occupies residues 1–48 (MGSLSAVPATNGNHAALNGSASTNGQHVNGSTHVNGNHSLNGSAQVNG). Polar residues predominate over residues 8 to 48 (PATNGNHAALNGSASTNGQHVNGSTHVNGNHSLNGSAQVNG). Residues 56–481 (LEPIAVVGMS…GTNAHVVVDA (426 aa)) form the Ketosynthase family 3 (KS3) domain. Active-site for beta-ketoacyl synthase activity residues include C230, H367, and H407. The malonyl-CoA:ACP transacylase (MAT) domain stretch occupies residues 595 to 913 (VFSGQGAQYP…HYTGSLKRGE (319 aa)). An N-terminal hotdog fold region spans residues 981-1119 (HELLGTLVHD…GLVQVILKSE (139 aa)). A dehydratase (DH) domain region spans residues 981–1281 (HELLGTLVHD…QAWGVVATKL (301 aa)). Residues 981–1287 (HELLGTLVHD…ATKLPDVSIG (307 aa)) enclose the PKS/mFAS DH domain. The active-site Proton acceptor; for dehydratase activity is H1013. The interval 1137-1287 (AQHIPANQFY…ATKLPDVSIG (151 aa)) is C-terminal hotdog fold. Residue D1200 is the Proton donor; for dehydratase activity of the active site. The segment at 1451-1556 (VEVGAGTGSA…KTMLRPGGKL (106 aa)) is methyltransferase (CMet) domain. The tract at residues 1840 to 2153 (GVLDTIRWVD…AGKHTGKVIL (314 aa)) is enoyl reductase (ER) domain. Positions 2177-2353 (ATYLVVGGLG…TAYAVNIGAI (177 aa)) are ketoreductase (KR) domain. Residues 2457 to 2534 (EAQDIICDAI…ELAEIVTKGS (78 aa)) enclose the Carrier domain. Position 2494 is an O-(pantetheine 4'-phosphoryl)serine (S2494).

The protein operates within secondary metabolite biosynthesis. Functionally, highly reducing polyketide synthase; part of the gene cluster that mediates the biosynthesis of the lipopeptide fusaristatin A. Fusaristatin A consists of a polyketide chain linked to three amino acid residues glutamine (Gln), dehydroalanine (dehydro-Ala), and beta-aminoisobutyric acid. The biosynthesis starts with formation of a linear polyketide chain by the highly reducing polyketide synthase PKS6. The gene cluster does not contain an acyl-CoA ligase or an acyl-transferase, and it is therefore predicted that the polyketide is transferred directly to the nonribosomal peptide synthetase NRPS7. Modules 1-3 from NRPS7 incorporate dehydro-Ala, Gln, and beta-aminoisobutyric acid in the compound, which is released by cyclization. The beta-aminoisobutyric acid units are most likely not freely available to the NRPS, but can be synthesized from thymine, which requires a dehydrogenase, a monooxygenase, and an aminotransferase. The fusaristatin A cluster contains a cytochrome P450 monooxygenase (FGSG_08207) and an aminotransferase (FGSG_17085), which theoretically can perform two of the enzymatic steps. The enzymes may however also be involved in biosynthesis of dehydroalanine or modification of the polyketide. The dehydro-Ala residue can be a result of cyclization, where serine is dehydrated. The last gene of the cluster encodes a protein with an A/B barrel domain found in variable enzymes, which hampers functional prediction. This chain is Highly reducing polyketide synthase PKS6, found in Gibberella zeae (strain ATCC MYA-4620 / CBS 123657 / FGSC 9075 / NRRL 31084 / PH-1) (Wheat head blight fungus).